The following is a 184-amino-acid chain: GTP cyclohydrolase 1 (184 aa).

Residues C74, H77, and C145 each contribute to the Zn(2+) site.

It belongs to the GTP cyclohydrolase I family. Toroid-shaped homodecamer, composed of two pentamers of five dimers.

The catalysed reaction is GTP + H2O = 7,8-dihydroneopterin 3'-triphosphate + formate + H(+). Its pathway is cofactor biosynthesis; 7,8-dihydroneopterin triphosphate biosynthesis; 7,8-dihydroneopterin triphosphate from GTP: step 1/1. The polypeptide is GTP cyclohydrolase 1 (folE) (Aquifex aeolicus (strain VF5)).